The primary structure comprises 238 residues: Large ribosomal subunit protein uL1 (238 aa).

It belongs to the universal ribosomal protein uL1 family. As to quaternary structure, part of the 50S ribosomal subunit.

Functionally, binds directly to 23S rRNA. The L1 stalk is quite mobile in the ribosome, and is involved in E site tRNA release. Its function is as follows. Protein L1 is also a translational repressor protein, it controls the translation of the L11 operon by binding to its mRNA. The protein is Large ribosomal subunit protein uL1 of Rippkaea orientalis (strain PCC 8801 / RF-1) (Cyanothece sp. (strain PCC 8801)).